Consider the following 547-residue polypeptide: Putative nitric oxide synthase (547 aa).

A compositionally biased stretch (low complexity) spans 24-40 (QLAPNPSSFSPTRAAST). Disordered regions lie at residues 24–57 (QLAPNPSSFSPTRAASTAPPPPEGAGPAAPSRGD) and 72–91 (VLAPEDAERRRRRREKRKAL). A compositionally biased stretch (basic residues) spans 81 to 91 (RRRRREKRKAL). In terms of domain architecture, CP-type G spans 167–343 (ADQLRDKLSY…LYDTPGVHLH (177 aa)).

The protein belongs to the TRAFAC class YlqF/YawG GTPase family. NOA1 subfamily.

The catalysed reaction is 2 L-arginine + 3 NADPH + 4 O2 + H(+) = 2 L-citrulline + 2 nitric oxide + 3 NADP(+) + 4 H2O. Produces nitric oxide (NO) which is a messenger molecule involved in hormonal signaling and defense responses in plant. This is Putative nitric oxide synthase from Oryza sativa subsp. japonica (Rice).